Consider the following 166-residue polypeptide: Phosphopantetheine adenylyltransferase (166 aa).

Substrate is bound at residue T10. ATP-binding positions include 10-11 and H18; that span reads TF. Substrate is bound by residues K42, L75, and R89. Residues 90 to 92, E100, and 125 to 131 each bind ATP; these read GVR and YTYVAST.

The protein belongs to the bacterial CoaD family. As to quaternary structure, homohexamer. It depends on Mg(2+) as a cofactor.

It localises to the cytoplasm. It carries out the reaction (R)-4'-phosphopantetheine + ATP + H(+) = 3'-dephospho-CoA + diphosphate. The protein operates within cofactor biosynthesis; coenzyme A biosynthesis; CoA from (R)-pantothenate: step 4/5. Reversibly transfers an adenylyl group from ATP to 4'-phosphopantetheine, yielding dephospho-CoA (dPCoA) and pyrophosphate. The polypeptide is Phosphopantetheine adenylyltransferase (Chlorobaculum parvum (strain DSM 263 / NCIMB 8327) (Chlorobium vibrioforme subsp. thiosulfatophilum)).